The primary structure comprises 398 residues: cAMP-dependent protein kinase, catalytic subunit-like (398 aa).

In terms of domain architecture, Protein kinase spans 90 to 344; that stretch reads LERIITIGKG…TQDVKDHKWF (255 aa). Residues 96-104 and K119 contribute to the ATP site; that span reads IGKGTFGRV. The active-site Proton acceptor is the D213. The 54-residue stretch at 345 to 398 folds into the AGC-kinase C-terminal domain; sequence EKVNWDDTLHLRVEPPIVPTLYHPGDTGNFDDYEEDTTGGPLCSQRDRDLFAEW.

The protein belongs to the protein kinase superfamily. Ser/Thr protein kinase family. cAMP subfamily.

It carries out the reaction L-seryl-[protein] + ATP = O-phospho-L-seryl-[protein] + ADP + H(+). The enzyme catalyses L-threonyl-[protein] + ATP = O-phospho-L-threonyl-[protein] + ADP + H(+). This chain is cAMP-dependent protein kinase, catalytic subunit-like, found in Caenorhabditis elegans.